Consider the following 245-residue polypeptide: 1-(5-phosphoribosyl)-5-[(5-phosphoribosylamino)methylideneamino] imidazole-4-carboxamide isomerase (245 aa).

Residue aspartate 7 is the Proton acceptor of the active site. Catalysis depends on aspartate 129, which acts as the Proton donor.

It belongs to the HisA/HisF family.

Its subcellular location is the cytoplasm. The enzyme catalyses 1-(5-phospho-beta-D-ribosyl)-5-[(5-phospho-beta-D-ribosylamino)methylideneamino]imidazole-4-carboxamide = 5-[(5-phospho-1-deoxy-D-ribulos-1-ylimino)methylamino]-1-(5-phospho-beta-D-ribosyl)imidazole-4-carboxamide. Its pathway is amino-acid biosynthesis; L-histidine biosynthesis; L-histidine from 5-phospho-alpha-D-ribose 1-diphosphate: step 4/9. The sequence is that of 1-(5-phosphoribosyl)-5-[(5-phosphoribosylamino)methylideneamino] imidazole-4-carboxamide isomerase from Citrobacter koseri (strain ATCC BAA-895 / CDC 4225-83 / SGSC4696).